A 748-amino-acid polypeptide reads, in one-letter code: Sulfhydryl oxidase 1 (748 aa).

The first 32 residues, 1 to 32 (MRRCGRLSGPPSLLLLLLLLSPLLFSGPGAYA), serve as a signal peptide directing secretion. Positions 33-159 (ARLSVLYSSS…RMRLIDALES (127 aa)) constitute a Thioredoxin domain. Catalysis depends on nucleophile residues Cys-73 and Cys-76. 2 disulfide bridges follow: Cys-73–Cys-76 and Cys-104–Cys-113. 2 N-linked (GlcNAc...) asparagine glycosylation sites follow: Asn-133 and Asn-246. An intrachain disulfide couples Cys-396 to Cys-408. The 108-residue stretch at 399-506 (SEPHFRGFPC…EDPHFPKVQW (108 aa)) folds into the ERV/ALR sulfhydryl oxidase domain. FAD-binding positions include Arg-404, Trp-411, His-415, Asp-454, His-458, 481-488 (WTSHNRVN), Lys-503, and Trp-506. A disulfide bond links Cys-452 and Cys-455. Cys-512 and Cys-515 are disulfide-bonded. The interval 581–647 (GHEQAASAES…QENAPGQQHL (67 aa)) is disordered. The span at 628–638 (ERMEDHQRDMQ) shows a compositional bias: basic and acidic residues. A helical transmembrane segment spans residues 711–731 (ISLCVGLYSVSFMGLLAMYTY).

This sequence belongs to the quiescin-sulfhydryl oxidase (QSOX) family. As to quaternary structure, monomer. The cofactor is FAD. In terms of processing, N-glycosylated. O-glycosylated on Thr and Ser residues. Detected in skin (at protein level). Expressed in the seminal vesicles and skin.

It localises to the golgi apparatus membrane. The protein localises to the secreted. It catalyses the reaction 2 R'C(R)SH + O2 = R'C(R)S-S(R)CR' + H2O2. Its function is as follows. Catalyzes the oxidation of sulfhydryl groups in peptide and protein thiols to disulfides with the reduction of oxygen to hydrogen peroxide. Plays a role in disulfide bond formation in a variety of extracellular proteins. In fibroblasts, required for normal incorporation of laminin into the extracellular matrix, and thereby for normal cell-cell adhesion and cell migration. The protein is Sulfhydryl oxidase 1 (Qsox1) of Mus musculus (Mouse).